Reading from the N-terminus, the 496-residue chain is L-arabinose isomerase (496 aa).

Residues Glu306, Glu331, His348, and His447 each contribute to the Mn(2+) site.

It belongs to the arabinose isomerase family. The cofactor is Mn(2+).

It catalyses the reaction beta-L-arabinopyranose = L-ribulose. The protein operates within carbohydrate degradation; L-arabinose degradation via L-ribulose; D-xylulose 5-phosphate from L-arabinose (bacterial route): step 1/3. In terms of biological role, catalyzes the conversion of L-arabinose to L-ribulose. The chain is L-arabinose isomerase from Geobacillus thermodenitrificans (strain NG80-2).